We begin with the raw amino-acid sequence, 346 residues long: Phosphate acyltransferase (346 aa).

It belongs to the PlsX family. In terms of assembly, homodimer. Probably interacts with PlsY.

It localises to the cytoplasm. It carries out the reaction a fatty acyl-[ACP] + phosphate = an acyl phosphate + holo-[ACP]. The protein operates within lipid metabolism; phospholipid metabolism. In terms of biological role, catalyzes the reversible formation of acyl-phosphate (acyl-PO(4)) from acyl-[acyl-carrier-protein] (acyl-ACP). This enzyme utilizes acyl-ACP as fatty acyl donor, but not acyl-CoA. This chain is Phosphate acyltransferase, found in Brucella suis biovar 1 (strain 1330).